A 255-amino-acid chain; its full sequence is Aliphatic sulfonates import ATP-binding protein SsuB (255 aa).

Positions 12–233 (LLLNAVSKHY…RLGSVRLAEL (222 aa)) constitute an ABC transporter domain. 44–51 (GRSGGGKS) is a binding site for ATP.

The protein belongs to the ABC transporter superfamily. Aliphatic sulfonates importer (TC 3.A.1.17.2) family. As to quaternary structure, the complex is composed of two ATP-binding proteins (SsuB), two transmembrane proteins (SsuC) and a solute-binding protein (SsuA).

Its subcellular location is the cell inner membrane. It carries out the reaction ATP + H2O + aliphatic sulfonate-[sulfonate-binding protein]Side 1 = ADP + phosphate + aliphatic sulfonateSide 2 + [sulfonate-binding protein]Side 1.. In terms of biological role, part of the ABC transporter complex SsuABC involved in aliphatic sulfonates import. Responsible for energy coupling to the transport system. In Escherichia coli (strain K12), this protein is Aliphatic sulfonates import ATP-binding protein SsuB.